A 276-amino-acid polypeptide reads, in one-letter code: Large ribosomal subunit protein uL2 (276 aa).

A disordered region spans residues 224 to 276; that stretch reads VMNPVDHPHGGGEGKAPIGRKSPMTPWGKPTLGFKTRKKKNKSDKFIIRRRKK. Basic residues predominate over residues 258-276; sequence KTRKKKNKSDKFIIRRRKK.

Belongs to the universal ribosomal protein uL2 family. Part of the 50S ribosomal subunit. Forms a bridge to the 30S subunit in the 70S ribosome.

Its function is as follows. One of the primary rRNA binding proteins. Required for association of the 30S and 50S subunits to form the 70S ribosome, for tRNA binding and peptide bond formation. It has been suggested to have peptidyltransferase activity; this is somewhat controversial. Makes several contacts with the 16S rRNA in the 70S ribosome. The chain is Large ribosomal subunit protein uL2 from Geobacillus sp. (strain WCH70).